Reading from the N-terminus, the 367-residue chain is Phosphoribosylaminoimidazole-succinocarboxamide synthase (367 aa).

It belongs to the SAICAR synthetase family.

It carries out the reaction 5-amino-1-(5-phospho-D-ribosyl)imidazole-4-carboxylate + L-aspartate + ATP = (2S)-2-[5-amino-1-(5-phospho-beta-D-ribosyl)imidazole-4-carboxamido]succinate + ADP + phosphate + 2 H(+). The protein operates within purine metabolism; IMP biosynthesis via de novo pathway; 5-amino-1-(5-phospho-D-ribosyl)imidazole-4-carboxamide from 5-amino-1-(5-phospho-D-ribosyl)imidazole-4-carboxylate: step 1/2. The sequence is that of Phosphoribosylaminoimidazole-succinocarboxamide synthase from Shewanella oneidensis (strain ATCC 700550 / JCM 31522 / CIP 106686 / LMG 19005 / NCIMB 14063 / MR-1).